Reading from the N-terminus, the 141-residue chain is Hemoglobin subunit alpha (141 aa).

The Globin domain maps to 1 to 141 (VLSAADKTAI…VATALGSHYR (141 aa)). Residue His59 coordinates O2. Residue His88 participates in heme b binding.

Belongs to the globin family. In terms of assembly, heterotetramer of two alpha chains and two beta chains. In terms of tissue distribution, red blood cells.

Its function is as follows. Involved in oxygen transport from the lung to the various peripheral tissues. The polypeptide is Hemoglobin subunit alpha (HBA) (Squalus acanthias (Spiny dogfish)).